Reading from the N-terminus, the 246-residue chain is tRNA pseudouridine synthase A (246 aa).

Residue D52 is the Nucleophile of the active site. Residue Y111 coordinates substrate.

It belongs to the tRNA pseudouridine synthase TruA family. As to quaternary structure, homodimer.

It carries out the reaction uridine(38/39/40) in tRNA = pseudouridine(38/39/40) in tRNA. In terms of biological role, formation of pseudouridine at positions 38, 39 and 40 in the anticodon stem and loop of transfer RNAs. The protein is tRNA pseudouridine synthase A of Fervidobacterium nodosum (strain ATCC 35602 / DSM 5306 / Rt17-B1).